We begin with the raw amino-acid sequence, 163 residues long: Acetolactate synthase isozyme 3 small subunit (163 aa).

Residues 4–78 form the ACT domain; sequence ILSVLLENES…DVLRVSELGQ (75 aa).

It belongs to the acetolactate synthase small subunit family. Dimer of large and small chains.

It carries out the reaction 2 pyruvate + H(+) = (2S)-2-acetolactate + CO2. It participates in amino-acid biosynthesis; L-isoleucine biosynthesis; L-isoleucine from 2-oxobutanoate: step 1/4. Its pathway is amino-acid biosynthesis; L-valine biosynthesis; L-valine from pyruvate: step 1/4. With respect to regulation, sensitive to valine inhibition. This chain is Acetolactate synthase isozyme 3 small subunit (ilvH), found in Escherichia coli (strain K12).